We begin with the raw amino-acid sequence, 95 residues long: Aspartyl/glutamyl-tRNA(Asn/Gln) amidotransferase subunit C (95 aa).

This sequence belongs to the GatC family. Heterotrimer of A, B and C subunits.

The enzyme catalyses L-glutamyl-tRNA(Gln) + L-glutamine + ATP + H2O = L-glutaminyl-tRNA(Gln) + L-glutamate + ADP + phosphate + H(+). It catalyses the reaction L-aspartyl-tRNA(Asn) + L-glutamine + ATP + H2O = L-asparaginyl-tRNA(Asn) + L-glutamate + ADP + phosphate + 2 H(+). Functionally, allows the formation of correctly charged Asn-tRNA(Asn) or Gln-tRNA(Gln) through the transamidation of misacylated Asp-tRNA(Asn) or Glu-tRNA(Gln) in organisms which lack either or both of asparaginyl-tRNA or glutaminyl-tRNA synthetases. The reaction takes place in the presence of glutamine and ATP through an activated phospho-Asp-tRNA(Asn) or phospho-Glu-tRNA(Gln). In Chlorobium phaeovibrioides (strain DSM 265 / 1930) (Prosthecochloris vibrioformis (strain DSM 265)), this protein is Aspartyl/glutamyl-tRNA(Asn/Gln) amidotransferase subunit C.